The sequence spans 107 residues: Polyketide synthase CurG (107 aa).

It functions in the pathway antibiotic biosynthesis; curamycin biosynthesis. The chain is Polyketide synthase CurG (curG) from Streptomyces cyaneus (Streptomyces curacoi).